A 340-amino-acid chain; its full sequence is N-acetyl-gamma-glutamyl-phosphate reductase (340 aa).

Cys-146 is an active-site residue.

This sequence belongs to the NAGSA dehydrogenase family. Type 1 subfamily.

Its subcellular location is the cytoplasm. The catalysed reaction is N-acetyl-L-glutamate 5-semialdehyde + phosphate + NADP(+) = N-acetyl-L-glutamyl 5-phosphate + NADPH + H(+). The protein operates within amino-acid biosynthesis; L-arginine biosynthesis; N(2)-acetyl-L-ornithine from L-glutamate: step 3/4. Catalyzes the NADPH-dependent reduction of N-acetyl-5-glutamyl phosphate to yield N-acetyl-L-glutamate 5-semialdehyde. The chain is N-acetyl-gamma-glutamyl-phosphate reductase from Streptococcus sanguinis (strain SK36).